We begin with the raw amino-acid sequence, 415 residues long: Lipoyl synthase, mitochondrial (415 aa).

The transit peptide at 1 to 32 (MAASTNRLRFLYSSARTVPQTGSITPISRRTY) directs the protein to the mitochondrion. Over residues 20–32 (QTGSITPISRRTY) the composition is skewed to polar residues. Residues 20–53 (QTGSITPISRRTYATTEPSPSATGAPATARKRTN) are disordered. Low complexity predominate over residues 33–47 (ATTEPSPSATGAPAT). Positions 132, 137, 143, 163, 167, 170, and 378 each coordinate [4Fe-4S] cluster. Residues 146 to 367 (GSDKSAATAT…RQRALDMGFL (222 aa)) enclose the Radical SAM core domain. The segment at 395–415 (AAGTAGESVTDSKAAVDEATR) is disordered.

Belongs to the radical SAM superfamily. Lipoyl synthase family. [4Fe-4S] cluster serves as cofactor.

The protein resides in the mitochondrion. It carries out the reaction [[Fe-S] cluster scaffold protein carrying a second [4Fe-4S](2+) cluster] + N(6)-octanoyl-L-lysyl-[protein] + 2 oxidized [2Fe-2S]-[ferredoxin] + 2 S-adenosyl-L-methionine + 4 H(+) = [[Fe-S] cluster scaffold protein] + N(6)-[(R)-dihydrolipoyl]-L-lysyl-[protein] + 4 Fe(3+) + 2 hydrogen sulfide + 2 5'-deoxyadenosine + 2 L-methionine + 2 reduced [2Fe-2S]-[ferredoxin]. The protein operates within protein modification; protein lipoylation via endogenous pathway; protein N(6)-(lipoyl)lysine from octanoyl-[acyl-carrier-protein]: step 2/2. Its function is as follows. Catalyzes the radical-mediated insertion of two sulfur atoms into the C-6 and C-8 positions of the octanoyl moiety bound to the lipoyl domains of lipoate-dependent enzymes, thereby converting the octanoylated domains into lipoylated derivatives. This is Lipoyl synthase, mitochondrial from Aspergillus flavus (strain ATCC 200026 / FGSC A1120 / IAM 13836 / NRRL 3357 / JCM 12722 / SRRC 167).